A 366-amino-acid polypeptide reads, in one-letter code: Aminomethyltransferase (366 aa).

It belongs to the GcvT family. In terms of assembly, the glycine cleavage system is composed of four proteins: P, T, L and H.

It carries out the reaction N(6)-[(R)-S(8)-aminomethyldihydrolipoyl]-L-lysyl-[protein] + (6S)-5,6,7,8-tetrahydrofolate = N(6)-[(R)-dihydrolipoyl]-L-lysyl-[protein] + (6R)-5,10-methylene-5,6,7,8-tetrahydrofolate + NH4(+). The glycine cleavage system catalyzes the degradation of glycine. The protein is Aminomethyltransferase of Bacillus cereus (strain ZK / E33L).